A 469-amino-acid chain; its full sequence is Putative diacyglycerol O-acyltransferase MT0231 (469 aa).

Residue His139 is the Proton acceptor of the active site.

This sequence belongs to the long-chain O-acyltransferase family.

It catalyses the reaction an acyl-CoA + a 1,2-diacyl-sn-glycerol = a triacyl-sn-glycerol + CoA. The protein operates within glycerolipid metabolism; triacylglycerol biosynthesis. The protein is Putative diacyglycerol O-acyltransferase MT0231 of Mycobacterium tuberculosis (strain CDC 1551 / Oshkosh).